The chain runs to 257 residues: Spindlin-2C (257 aa).

Residues 1–47 form a disordered region; that stretch reads MKTPHKKGAAKEQMGEGVGHHIGSTTIKKKKASQKRQRSRSSSRRSI. A compositionally biased stretch (basic residues) spans 27–43; sequence IKKKKASQKRQRSRSSS. Tudor-like domain regions lie at residues 48 to 97, 127 to 176, and 208 to 253; these read VGCR…LELH, IGKA…YQLL, and IGKH…YDLV. Histone H3K4me3 and H3R8me2a binding stretches follow at residues Glu-136 and 244-246; that span reads DFH.

Belongs to the SPIN/STSY family. As to quaternary structure, interacts with C11orf84/SPINDOC.

It is found in the nucleus. Functionally, may be involved in the regulation of cell cycle progression. Exhibits H3K4me3-binding activity. The chain is Spindlin-2C (Spin2c) from Mus musculus (Mouse).